Reading from the N-terminus, the 358-residue chain is 3-dehydroquinate synthase (358 aa).

NAD(+)-binding positions include 70 to 75, 104 to 108, 128 to 129, Lys141, Lys150, and 168 to 171; these read DGEQFK, GVIGD, TT, and CLHT. Positions 183, 246, and 263 each coordinate Zn(2+).

It belongs to the sugar phosphate cyclases superfamily. Dehydroquinate synthase family. Co(2+) serves as cofactor. Zn(2+) is required as a cofactor. It depends on NAD(+) as a cofactor.

The protein localises to the cytoplasm. The enzyme catalyses 7-phospho-2-dehydro-3-deoxy-D-arabino-heptonate = 3-dehydroquinate + phosphate. The protein operates within metabolic intermediate biosynthesis; chorismate biosynthesis; chorismate from D-erythrose 4-phosphate and phosphoenolpyruvate: step 2/7. Functionally, catalyzes the conversion of 3-deoxy-D-arabino-heptulosonate 7-phosphate (DAHP) to dehydroquinate (DHQ). This is 3-dehydroquinate synthase from Shewanella baltica (strain OS155 / ATCC BAA-1091).